Reading from the N-terminus, the 95-residue chain is MPKLAVVLLVLLILPLSYFDAAGGQAVQGDRRGNGLARYLQRNGRDNEAECQIDTPGSSWGKCCMTRMCGTMCCSRSVCTCVYHWRRGHGCSCPG.

The N-terminal stretch at 1 to 24 (MPKLAVVLLVLLILPLSYFDAAGG) is a signal peptide. The propeptide occupies 25–45 (QAVQGDRRGNGLARYLQRNGR). 4-carboxyglutamate is present on glutamate 50. Proline 56 is modified (4-hydroxyproline). 4 disulfides stabilise this stretch: cysteine 64-cysteine 73, cysteine 69-cysteine 81, cysteine 74-cysteine 91, and cysteine 79-cysteine 93.

This sequence belongs to the conotoxin D superfamily. In terms of assembly, hetero-, homo- or pseudo-homodimer (identical sequence, different post-translational modifications). In terms of tissue distribution, expressed by the venom duct.

The protein resides in the secreted. Its function is as follows. Alpha-conotoxins act on postsynaptic membranes, they bind to the nicotinic acetylcholine receptors (nAChR) and thus inhibit them. Through its two C-terminal domains, this homodimeric protein would bind to two nAChR allosteric sites, located outside the nAChR C-loop of the principal binding face and at the adjacent binding interface in a clockwise direction. This toxin specifically blocks mammalian neuronal nAChR of the alpha-7/CHRNA7, alpha-3-beta-2/CHRNA3-CHRNB2 and alpha-4-beta-2/CHRNA4-CHRNB2 subtypes. The sequence is that of Alpha-conotoxin-like Cp20.5 from Conus capitaneus (Captain cone).